Here is a 267-residue protein sequence, read N- to C-terminus: GTP cyclohydrolase FolE2 (267 aa).

Belongs to the GTP cyclohydrolase IV family.

It catalyses the reaction GTP + H2O = 7,8-dihydroneopterin 3'-triphosphate + formate + H(+). It functions in the pathway cofactor biosynthesis; 7,8-dihydroneopterin triphosphate biosynthesis; 7,8-dihydroneopterin triphosphate from GTP: step 1/1. Functionally, converts GTP to 7,8-dihydroneopterin triphosphate. The sequence is that of GTP cyclohydrolase FolE2 from Nitrosococcus oceani (strain ATCC 19707 / BCRC 17464 / JCM 30415 / NCIMB 11848 / C-107).